Reading from the N-terminus, the 219-residue chain is Putative mediator of RNA polymerase II transcription subunit 10 (219 aa).

Over residues 1–39 (MEQQQPQQQNDGQQQQQQQQQHQQQQQQQQQQQQQQQQS) the composition is skewed to low complexity. 2 disordered regions span residues 1-42 (MEQQ…SEQE) and 177-219 (KETQ…INNN). Coiled coils occupy residues 13-74 (QQQQ…VVEE) and 166-219 (EYAE…INNN). A compositionally biased stretch (basic and acidic residues) spans 177 to 192 (KETQEQQNDDQIKVDD). Residues 194 to 219 (NNNNNNNNNNNYNNNNNNNNNNINNN) are compositionally biased toward low complexity.

The protein belongs to the Mediator complex subunit 10 family. As to quaternary structure, component of the Mediator complex.

The protein localises to the nucleus. Component of the Mediator complex, a coactivator involved in the regulated transcription of nearly all RNA polymerase II-dependent genes. Mediator functions as a bridge to convey information from gene-specific regulatory proteins to the basal RNA polymerase II transcription machinery. Mediator is recruited to promoters by direct interactions with regulatory proteins and serves as a scaffold for the assembly of a functional preinitiation complex with RNA polymerase II and the general transcription factors. This Dictyostelium discoideum (Social amoeba) protein is Putative mediator of RNA polymerase II transcription subunit 10 (med10).